The chain runs to 511 residues: GATOR complex protein NPRL3 (511 aa).

The disordered stretch occupies residues 37–58 (KPATKAPSKDPQPSSSNPGQCV).

The protein belongs to the NPR3 family. In terms of assembly, probably part of the GATOR complex.

The protein localises to the lysosome membrane. In terms of biological role, as a component of the GATOR complex may function in the amino acid-sensing branch of the TORC1 signaling pathway. The chain is GATOR complex protein NPRL3 (nprl-3) from Caenorhabditis elegans.